The chain runs to 1244 residues: Superkiller complex protein 2 (1244 aa).

Residues 218-249 (LDLSGGDEDEGEAAGGPRGDNASPSPSGTPLV) are disordered. Phosphoserine occurs at positions 242 and 253. One can recognise a Helicase ATP-binding domain in the interval 316–472 (ILHLEQHDSV…WIGRLKRRQI (157 aa)). An ATP-binding site is contributed by 329-336 (AHTSAGKT). Positions 420-423 (DEVH) match the DEVH box motif. Residues 582–752 (GLTSLDLTTS…LTYTMILNLL (171 aa)) form the Helicase C-terminal domain.

It belongs to the helicase family. SKI2 subfamily. As to quaternary structure, component of the SKI complex which consists of SKIC2, SKIC3 and SKIC8. Interacts with HBS1L isoform 2.

Its subcellular location is the nucleus. The protein localises to the cytoplasm. It carries out the reaction ATP + H2O = ADP + phosphate + H(+). Its function is as follows. Helicase component of the SKI complex, a multiprotein complex that assists the RNA-degrading exosome during the mRNA decay and quality-control pathways. The SKI complex catalyzes mRNA extraction from 80S ribosomal complexes in the 3'-5' direction and channels mRNA to the cytosolic exosome for degradation. SKI-mediated extraction of mRNA from stalled ribosomes allow binding of the Pelota-HBS1L complex and subsequent ribosome disassembly by ABCE1 for ribosome recycling. In the nucleus, the SKI complex associates with transcriptionally active genes in a manner dependent on PAF1 complex (PAF1C). This Mus musculus (Mouse) protein is Superkiller complex protein 2.